Reading from the N-terminus, the 609-residue chain is Glutamine--fructose-6-phosphate aminotransferase [isomerizing] (609 aa).

Cysteine 2 acts as the Nucleophile; for GATase activity in catalysis. Residues 2–218 (CGIVGAIAQR…EGDIAEITRR (217 aa)) form the Glutamine amidotransferase type-2 domain. SIS domains lie at 286–426 (ADEL…LKGL) and 458–599 (LAED…VDQP). Residue lysine 604 is the For Fru-6P isomerization activity of the active site.

Homodimer.

The protein resides in the cytoplasm. It carries out the reaction D-fructose 6-phosphate + L-glutamine = D-glucosamine 6-phosphate + L-glutamate. In terms of biological role, catalyzes the first step in hexosamine metabolism, converting fructose-6P into glucosamine-6P using glutamine as a nitrogen source. The chain is Glutamine--fructose-6-phosphate aminotransferase [isomerizing] from Escherichia coli O157:H7.